The primary structure comprises 147 residues: Large ribosomal subunit protein uL13 (147 aa).

This sequence belongs to the universal ribosomal protein uL13 family. As to quaternary structure, part of the 50S ribosomal subunit.

Its function is as follows. This protein is one of the early assembly proteins of the 50S ribosomal subunit, although it is not seen to bind rRNA by itself. It is important during the early stages of 50S assembly. The chain is Large ribosomal subunit protein uL13 from Rhodococcus opacus (strain B4).